Reading from the N-terminus, the 420-residue chain is Caspase-12 (420 aa).

The 92-residue stretch at M1–D92 folds into the CARD domain. S85 and S90 each carry phosphoserine. Residues E93–D115 are disordered. Active-site residues include H251 and C299.

The protein belongs to the peptidase C14A family. Heterotetramer that consists of two anti-parallel arranged heterodimers, each one formed by two subunits (Potential). May interact with TRAF2.

Its function is as follows. Involved in the activation cascade of caspases responsible for apoptosis execution. This is Caspase-12 (Casp12) from Rattus norvegicus (Rat).